A 219-amino-acid polypeptide reads, in one-letter code: 2-C-methyl-D-erythritol 4-phosphate cytidylyltransferase (219 aa).

It belongs to the IspD/TarI cytidylyltransferase family. IspD subfamily.

The catalysed reaction is 2-C-methyl-D-erythritol 4-phosphate + CTP + H(+) = 4-CDP-2-C-methyl-D-erythritol + diphosphate. It functions in the pathway isoprenoid biosynthesis; isopentenyl diphosphate biosynthesis via DXP pathway; isopentenyl diphosphate from 1-deoxy-D-xylulose 5-phosphate: step 2/6. Catalyzes the formation of 4-diphosphocytidyl-2-C-methyl-D-erythritol from CTP and 2-C-methyl-D-erythritol 4-phosphate (MEP). The protein is 2-C-methyl-D-erythritol 4-phosphate cytidylyltransferase of Chlamydia trachomatis serovar D (strain ATCC VR-885 / DSM 19411 / UW-3/Cx).